Reading from the N-terminus, the 543-residue chain is Zinc finger CCHC domain-containing protein 7 (543 aa).

Residues 51–71 (EEEHEEKNSGNSESSSSKPNQ) are disordered. Low complexity predominate over residues 59 to 68 (SGNSESSSSK). Residues K131, K139, K141, K239, and K254 each participate in a glycyl lysine isopeptide (Lys-Gly) (interchain with G-Cter in SUMO2) cross-link. CCHC-type zinc fingers lie at residues 241-258 (IICR…NCPL), 263-280 (RRCF…SCPA), and 304-321 (KQCD…ACTE). Residue K339 forms a Glycyl lysine isopeptide (Lys-Gly) (interchain with G-Cter in SUMO2) linkage. Residues 348–365 (AYCYHCAQKGHYGHECPE) form a CCHC-type 4 zinc finger. Glycyl lysine isopeptide (Lys-Gly) (interchain with G-Cter in SUMO2) cross-links involve residues K412, K417, and K435. A disordered region spans residues 414-543 (PYIKAANENP…FLIKQRKKKS (130 aa)). Basic and acidic residues-rich tracts occupy residues 441-457 (QENK…NRNW) and 465-475 (RHREVDEDFPR). K478 participates in a covalent cross-link: Glycyl lysine isopeptide (Lys-Gly) (interchain with G-Cter in SUMO2). Residues 479–491 (TYSSPGSFKTQKP) are compositionally biased toward polar residues. 2 positions are modified to phosphoserine: S482 and S485. Residues K487, K490, and K493 each participate in a glycyl lysine isopeptide (Lys-Gly) (interchain with G-Cter in SUMO2) cross-link. Residues 493 to 502 (KPFHRSSHYH) are compositionally biased toward basic residues. A compositionally biased stretch (basic and acidic residues) spans 503-515 (TSREDKSPKEGKR). K537 is covalently cross-linked (Glycyl lysine isopeptide (Lys-Gly) (interchain with G-Cter in SUMO2)).

In terms of assembly, component of a nucleolar TRAMP-like complex, an ATP-dependent exosome regulatory complex consisting of a helicase (MTREX), an oligadenylate polymerase (TENT4B or TENT4A), and a substrate specific RNA-binding factor (ZCCHC7 or ZCCHC8). Several TRAMP-like complexes exist with specific compositions and are associated with nuclear, or nucleolar RNA exosomes.

The protein resides in the nucleus. Its subcellular location is the nucleolus. The chain is Zinc finger CCHC domain-containing protein 7 (ZCCHC7) from Homo sapiens (Human).